Consider the following 174-residue polypeptide: FMN-dependent NADPH-azoreductase (174 aa).

Residues Thr9 to Arg11, Arg15 to Thr16, Glu73 to Ser76, and Gly106 contribute to the FMN site.

This sequence belongs to the azoreductase type 2 family. In terms of assembly, homotetramer. FMN serves as cofactor.

Its function is as follows. Catalyzes the reductive cleavage of azo bond in aromatic azo compounds to the corresponding amines. Requires NADPH, but not NADH, as an electron donor for its activity. The sequence is that of FMN-dependent NADPH-azoreductase (azr) from Bacillus subtilis (strain 168).